The following is a 156-amino-acid chain: Ribosomal RNA large subunit methyltransferase H (156 aa).

S-adenosyl-L-methionine contacts are provided by residues Leu-73, Gly-104, and 123–128 (LSPLTL).

The protein belongs to the RNA methyltransferase RlmH family. In terms of assembly, homodimer.

The protein localises to the cytoplasm. The enzyme catalyses pseudouridine(1915) in 23S rRNA + S-adenosyl-L-methionine = N(3)-methylpseudouridine(1915) in 23S rRNA + S-adenosyl-L-homocysteine + H(+). Specifically methylates the pseudouridine at position 1915 (m3Psi1915) in 23S rRNA. The protein is Ribosomal RNA large subunit methyltransferase H of Photorhabdus laumondii subsp. laumondii (strain DSM 15139 / CIP 105565 / TT01) (Photorhabdus luminescens subsp. laumondii).